We begin with the raw amino-acid sequence, 166 residues long: Small ribosomal subunit protein bS6 (166 aa).

Basic and acidic residues-rich tracts occupy residues 96 to 142 (HEEG…DRPP) and 149 to 166 (GGDR…GGAE). The disordered stretch occupies residues 96–166 (HEEGPSAMMQ…PREGFEGGAE (71 aa)).

The protein belongs to the bacterial ribosomal protein bS6 family.

In terms of biological role, binds together with bS18 to 16S ribosomal RNA. The chain is Small ribosomal subunit protein bS6 from Mesorhizobium japonicum (strain LMG 29417 / CECT 9101 / MAFF 303099) (Mesorhizobium loti (strain MAFF 303099)).